A 289-amino-acid polypeptide reads, in one-letter code: 4-hydroxy-3-methylbut-2-enyl diphosphate reductase (289 aa).

C12 serves as a coordination point for [4Fe-4S] cluster. Positions 41 and 84 each coordinate (2E)-4-hydroxy-3-methylbut-2-enyl diphosphate. Positions 41 and 84 each coordinate dimethylallyl diphosphate. Isopentenyl diphosphate is bound by residues H41 and H84. C106 serves as a coordination point for [4Fe-4S] cluster. H134 lines the (2E)-4-hydroxy-3-methylbut-2-enyl diphosphate pocket. H134 serves as a coordination point for dimethylallyl diphosphate. H134 serves as a coordination point for isopentenyl diphosphate. E136 serves as the catalytic Proton donor. S172 contributes to the (2E)-4-hydroxy-3-methylbut-2-enyl diphosphate binding site. Residue C200 coordinates [4Fe-4S] cluster. 3 residues coordinate (2E)-4-hydroxy-3-methylbut-2-enyl diphosphate: S229, N231, and S273. The dimethylallyl diphosphate site is built by S229, N231, and S273. S229, N231, and S273 together coordinate isopentenyl diphosphate.

The protein belongs to the IspH family. The cofactor is [4Fe-4S] cluster.

It catalyses the reaction isopentenyl diphosphate + 2 oxidized [2Fe-2S]-[ferredoxin] + H2O = (2E)-4-hydroxy-3-methylbut-2-enyl diphosphate + 2 reduced [2Fe-2S]-[ferredoxin] + 2 H(+). The enzyme catalyses dimethylallyl diphosphate + 2 oxidized [2Fe-2S]-[ferredoxin] + H2O = (2E)-4-hydroxy-3-methylbut-2-enyl diphosphate + 2 reduced [2Fe-2S]-[ferredoxin] + 2 H(+). It functions in the pathway isoprenoid biosynthesis; dimethylallyl diphosphate biosynthesis; dimethylallyl diphosphate from (2E)-4-hydroxy-3-methylbutenyl diphosphate: step 1/1. The protein operates within isoprenoid biosynthesis; isopentenyl diphosphate biosynthesis via DXP pathway; isopentenyl diphosphate from 1-deoxy-D-xylulose 5-phosphate: step 6/6. Functionally, catalyzes the conversion of 1-hydroxy-2-methyl-2-(E)-butenyl 4-diphosphate (HMBPP) into a mixture of isopentenyl diphosphate (IPP) and dimethylallyl diphosphate (DMAPP). Acts in the terminal step of the DOXP/MEP pathway for isoprenoid precursor biosynthesis. This is 4-hydroxy-3-methylbut-2-enyl diphosphate reductase from Opitutus terrae (strain DSM 11246 / JCM 15787 / PB90-1).